Consider the following 208-residue polypeptide: Small ribosomal subunit protein eS8 (208 aa).

It belongs to the eukaryotic ribosomal protein eS8 family. Component of the small ribosomal subunit. Identified in a IGF2BP1-dependent mRNP granule complex containing untranslated mRNAs. Part of the small subunit (SSU) processome, composed of more than 70 proteins and the RNA chaperone small nucleolar RNA (snoRNA) U3.

It is found in the cytoplasm. The protein localises to the membrane. It localises to the nucleus. The protein resides in the nucleolus. Component of the small ribosomal subunit. The ribosome is a large ribonucleoprotein complex responsible for the synthesis of proteins in the cell. Part of the small subunit (SSU) processome, first precursor of the small eukaryotic ribosomal subunit. During the assembly of the SSU processome in the nucleolus, many ribosome biogenesis factors, an RNA chaperone and ribosomal proteins associate with the nascent pre-rRNA and work in concert to generate RNA folding, modifications, rearrangements and cleavage as well as targeted degradation of pre-ribosomal RNA by the RNA exosome. The polypeptide is Small ribosomal subunit protein eS8 (rps-8) (Caenorhabditis elegans).